The sequence spans 294 residues: tRNA pseudouridine synthase B (294 aa).

Residue Asp-39 is the Nucleophile of the active site.

This sequence belongs to the pseudouridine synthase TruB family. Type 1 subfamily.

The catalysed reaction is uridine(55) in tRNA = pseudouridine(55) in tRNA. Its function is as follows. Responsible for synthesis of pseudouridine from uracil-55 in the psi GC loop of transfer RNAs. This chain is tRNA pseudouridine synthase B, found in Streptococcus pyogenes serotype M5 (strain Manfredo).